The following is a 376-amino-acid chain: Cyclic GMP-AMP synthase-like receptor 1 (376 aa).

The Mg(2+) site is built by Glu77 and Asp79.

This sequence belongs to the mab-21 family. Mg(2+) is required as a cofactor. The cofactor is Mn(2+).

It catalyses the reaction UTP + ATP = 3',3'-cUAMP + 2 diphosphate. Functionally, nucleotidyltransferase that catalyzes the formation of cyclic UMP-AMP (3',3'-cUAMP) from ATP and UTP and plays a key role in innate immunity. Acts as a key sensor of double-stranded RNA (dsRNA), the presence of dsRNA in the cytoplasm being a danger signal that triggers the immune responses. Directly binds dsRNA, activating the nucleotidyltransferase activity, leading to synthesis of 3',3'-cUAMP, a second messenger that binds to and activates Sting, thereby triggering the immune response via activation of the NF-kappa-B transcription factor. This Stylophora pistillata (Smooth cauliflower coral) protein is Cyclic GMP-AMP synthase-like receptor 1.